The primary structure comprises 490 residues: Cysteine--tRNA ligase (490 aa).

Cysteine 31 serves as a coordination point for Zn(2+). The short motif at 33 to 43 (PTVYGDAHLGH) is the 'HIGH' region element. Residues cysteine 226, histidine 251, and glutamate 255 each coordinate Zn(2+). The 'KMSKS' region signature appears at 283–287 (KMGKS). Lysine 286 serves as a coordination point for ATP.

The protein belongs to the class-I aminoacyl-tRNA synthetase family. In terms of assembly, monomer. Zn(2+) serves as cofactor.

It is found in the cytoplasm. It catalyses the reaction tRNA(Cys) + L-cysteine + ATP = L-cysteinyl-tRNA(Cys) + AMP + diphosphate. The chain is Cysteine--tRNA ligase from Porphyromonas gingivalis (strain ATCC BAA-308 / W83).